The primary structure comprises 187 residues: Ribosome-recycling factor (187 aa).

This sequence belongs to the RRF family.

The protein localises to the cytoplasm. Its function is as follows. Responsible for the release of ribosomes from messenger RNA at the termination of protein biosynthesis. May increase the efficiency of translation by recycling ribosomes from one round of translation to another. The protein is Ribosome-recycling factor of Anaeromyxobacter sp. (strain Fw109-5).